Here is a 500-residue protein sequence, read N- to C-terminus: MMICHQCLDQDDSSEEEEAVSVYSPSTLVKLARQRLLREEALVISALKGLPNMLFPVIFEEAFINGHTKILKAMIPMWPFPYLSVGALTNNCNLKTLKAVLDGLDILLAQKVRSSRCKLRVLKWRDEQHDFCGIWPGSHEAEDLPELMTQKHPVQNNPDCGVKKELRVTTELSVMKGRLDDSATYLLEWAQQRKDSIHLLCRKLVIETLTKDTVIEIFKIVNADCIQELELYSLCLEDLAFLNPYLRQMDNLLELTLDHVTDSLSMGDSEMCEEEMITLVSQLPTFPCLQKLCVNDVYFIYGNLNEILRCLKKPLVSFCISNCELSQSDLDCLPYCLNIFELKCLYLIDIPLNHLCLDPLGFLLESVRHTLECLELKSCDMGEPQFNALLPALSQCSHLTDVSFWENELSLLFLKQLLQHTSKLTQLSYELYPAPLECYDDRGLILSHRLEQFCPELLDILRAKRQPKDIAFVTNPCSKCGRYYVYDPKTQRFSLEDTTL.

Residues 116–143 form an LRR 1; degenerate repeat; the sequence is RCKLRVLKWRDEQHDFCGIWPGSHEAED. The LRR 2; degenerate repeat unit spans residues 198 to 222; it reads HLLCRKLVIETLTKDTVIEIFKIVN. The stretch at 223–248 is one LRR 3; degenerate repeat; sequence ADCIQELELYSLCLEDLAFLNPYLRQ. The stretch at 249 to 285 is one LRR 4; degenerate repeat; that stretch reads MDNLLELTLDHVTDSLSMGDSEMCEEEMITLVSQLPT. LRR repeat units follow at residues 286 to 311, 312 to 343, 344 to 367, 368 to 395, and 396 to 420; these read FPCL…LRCL, KKPL…FELK, CLYL…LESV, RHTL…ALSQ, and CSHL…LLQH.

The protein belongs to the PRAME family. Expressed in ovary, specifically in oocytes. Detected in follicles with two layers of granulosa cells, and are present in early as well as large antral follicles.

This Mus musculus (Mouse) protein is Oogenesin-3.